The sequence spans 240 residues: 1-(5-phosphoribosyl)-5-[(5-phosphoribosylamino)methylideneamino] imidazole-4-carboxamide isomerase (240 aa).

D8 acts as the Proton acceptor in catalysis. The active-site Proton donor is the D129.

This sequence belongs to the HisA/HisF family.

Its subcellular location is the cytoplasm. It carries out the reaction 1-(5-phospho-beta-D-ribosyl)-5-[(5-phospho-beta-D-ribosylamino)methylideneamino]imidazole-4-carboxamide = 5-[(5-phospho-1-deoxy-D-ribulos-1-ylimino)methylamino]-1-(5-phospho-beta-D-ribosyl)imidazole-4-carboxamide. It participates in amino-acid biosynthesis; L-histidine biosynthesis; L-histidine from 5-phospho-alpha-D-ribose 1-diphosphate: step 4/9. This is 1-(5-phosphoribosyl)-5-[(5-phosphoribosylamino)methylideneamino] imidazole-4-carboxamide isomerase from Listeria monocytogenes serotype 4b (strain F2365).